The chain runs to 1235 residues: JNK-interacting protein 3 (1235 aa).

Residues 1-22 (MMDNDDALLNNGGPQSGAETVY) form a disordered region. The RH1 domain maps to 25–113 (EDNNMVMSEK…VTQYEREKSA (89 aa)). Positions 84–184 (RINQEQDVEL…NKLHERYTEL (101 aa)) form a coiled coil. The segment at 278–325 (GAATDSLQQQHQATSPQSPPDTSPVVPNVPPANVGRSTTKKEQRSDNN) is disordered. Over residues 282–293 (DSLQQQHQATSP) the composition is skewed to polar residues. Pro residues predominate over residues 294–307 (QSPPDTSPVVPNVP). Positions 366-493 (GKEVENLIME…AVRLTEILRA (128 aa)) form a coiled coil. Residues 456–526 (RKRFTRVEMA…TPSNRPTERI (71 aa)) form the RH2 domain. Disordered regions lie at residues 520-572 (NRPT…MHPA), 813-852 (KPKS…PVNA), and 869-897 (PGAP…STGS). The span at 529–543 (GLGGGPMFRNTGGGS) shows a compositional bias: gly residues. Low complexity-rich tracts occupy residues 544–555 (PAHSHGSPSRGS) and 821–830 (NSNSKPQQQQ). Polar residues predominate over residues 874-897 (RLSSGNSGSDGNQANNNNSSSTGS).

Belongs to the JIP scaffold family. Forms homo- and heterooligomeric complexes. Binds the TPR motif-containing C-terminal of kinesin light chain, Klc. Pre-assembled syd scaffolding complexes are then transported as a cargo of kinesin, to the required subcellular location.

It is found in the cytoplasm. Its function is as follows. The JNK-interacting protein (JIP) group of scaffold proteins selectively mediates JNK-signaling by aggregating specific components of the MAPK cascade to form a functional JNK signaling module. May function as a regulator of vesicle transport, through interactions with the JNK-signaling components and motor proteins. Syd is required for efficient kinesin-I mediated axonal transport. The chain is JNK-interacting protein 3 from Drosophila pseudoobscura pseudoobscura (Fruit fly).